A 127-amino-acid polypeptide reads, in one-letter code: Translation initiation factor 5A (127 aa).

Residue Lys36 is modified to Hypusine.

This sequence belongs to the eIF-5A family.

The protein resides in the cytoplasm. In terms of biological role, functions by promoting the formation of the first peptide bond. In Halobacterium salinarum (strain ATCC 700922 / JCM 11081 / NRC-1) (Halobacterium halobium), this protein is Translation initiation factor 5A (eif5a).